The sequence spans 454 residues: Phosphoglucosamine mutase (454 aa).

Ser-101 acts as the Phosphoserine intermediate in catalysis. Residues Ser-101, Asp-243, Asp-245, and Asp-247 each coordinate Mg(2+). Position 101 is a phosphoserine (Ser-101).

It belongs to the phosphohexose mutase family. The cofactor is Mg(2+). Activated by phosphorylation.

It carries out the reaction alpha-D-glucosamine 1-phosphate = D-glucosamine 6-phosphate. Functionally, catalyzes the conversion of glucosamine-6-phosphate to glucosamine-1-phosphate. The sequence is that of Phosphoglucosamine mutase from Geotalea daltonii (strain DSM 22248 / JCM 15807 / FRC-32) (Geobacter daltonii).